Reading from the N-terminus, the 165-residue chain is UPF0262 protein Sala_0765 (165 aa).

Belongs to the UPF0262 family.

In Sphingopyxis alaskensis (strain DSM 13593 / LMG 18877 / RB2256) (Sphingomonas alaskensis), this protein is UPF0262 protein Sala_0765.